We begin with the raw amino-acid sequence, 311 residues long: Malate dehydrogenase (311 aa).

Residues 7–13 (GAAGGIG) and aspartate 34 contribute to the NAD(+) site. Positions 81 and 87 each coordinate substrate. NAD(+) contacts are provided by residues asparagine 94 and 117–119 (ITN). The substrate site is built by asparagine 119 and arginine 153. The active-site Proton acceptor is histidine 177. An NAD(+)-binding site is contributed by methionine 227.

Belongs to the LDH/MDH superfamily. MDH type 1 family. In terms of assembly, homodimer.

The catalysed reaction is (S)-malate + NAD(+) = oxaloacetate + NADH + H(+). Catalyzes the reversible oxidation of malate to oxaloacetate. The sequence is that of Malate dehydrogenase from Shewanella baltica (strain OS155 / ATCC BAA-1091).